Reading from the N-terminus, the 497-residue chain is Membrane-bound lytic murein transglycosylase F (497 aa).

Residues 1-29 (MFFRPDFRPRCAKWLIATGLFLMLGACVE) form the signal peptide. The interval 30-267 (KPTTLERVKE…RLKDRYYGHV (238 aa)) is non-LT domain. The segment at 268-497 (DVLGYVGAYT…PASSPEKPAL (230 aa)) is LT domain. Residue Glu314 is part of the active site. Residues 464–497 (VADGNLHVPGVDKTQPPAPTAPVVPASSPEKPAL) form a disordered region. Over residues 486-497 (VVPASSPEKPAL) the composition is skewed to low complexity.

The protein in the N-terminal section; belongs to the bacterial solute-binding protein 3 family. In the C-terminal section; belongs to the transglycosylase Slt family.

The protein resides in the cell outer membrane. The catalysed reaction is Exolytic cleavage of the (1-&gt;4)-beta-glycosidic linkage between N-acetylmuramic acid (MurNAc) and N-acetylglucosamine (GlcNAc) residues in peptidoglycan, from either the reducing or the non-reducing ends of the peptidoglycan chains, with concomitant formation of a 1,6-anhydrobond in the MurNAc residue.. Its function is as follows. Murein-degrading enzyme that degrades murein glycan strands and insoluble, high-molecular weight murein sacculi, with the concomitant formation of a 1,6-anhydromuramoyl product. Lytic transglycosylases (LTs) play an integral role in the metabolism of the peptidoglycan (PG) sacculus. Their lytic action creates space within the PG sacculus to allow for its expansion as well as for the insertion of various structures such as secretion systems and flagella. In Pseudomonas syringae pv. tomato (strain ATCC BAA-871 / DC3000), this protein is Membrane-bound lytic murein transglycosylase F.